The following is a 419-amino-acid chain: Zinc finger protein Pegasus (419 aa).

Residue Lys-5 forms a Glycyl lysine isopeptide (Lys-Gly) (interchain with G-Cter in SUMO2) linkage. C2H2-type zinc fingers lie at residues 82 to 104 (LKCRYCNYASKGTARLIEHIRIH), 110 to 132 (HRCHLCPFASAYERHLEAHMRSH), and 138 to 161 (YKCELCSFRCSDRSNLSHHRRRKH). Lys-185 is covalently cross-linked (Glycyl lysine isopeptide (Lys-Gly) (interchain with G-Cter in SUMO2)). The span at 223 to 236 (QTDSYESMAKTTPT) shows a compositional bias: polar residues. Disordered stretches follow at residues 223 to 245 (QTDSYESMAKTTPTGGLPRDPQE) and 288 to 356 (MQQP…PTLP). Positions 289-311 (QQPSAQAVVSAVSASLPQSSSPA) are enriched in low complexity. Residues 332-349 (SEPSAHTSTPSMGNSQPS) show a composition bias toward polar residues. 2 C2H2-type zinc fingers span residues 364-386 (HHCQHCDMYFADNILYTIHMGCH) and 392-416 (FQCNICGCKCKNKYDFACHFARGQH).

It belongs to the Ikaros C2H2-type zinc-finger protein family. Self-associates. Interacts with other family members; IKZF1, IKZF2, IKZF3 and IKZF4.

It localises to the nucleus. In terms of biological role, transcriptional repressor that binds the core 5'GNNTGTNG-3' DNA consensus sequence. Involved in megakaryocyte differentiation. This is Zinc finger protein Pegasus (IKZF5) from Bos taurus (Bovine).